Consider the following 199-residue polypeptide: MTQALKDLGEYIAQALPQDVLGTEVNRCGELSLTVKAASIVKVMTYLKDDAGCLFKQLVDVCGVDWPGREQRFDVVYHLLSMKHNQRVRVKVATDEETAVPSVTGVFSSAGWFEREVWDMYGVLFSDHPDLRRILTDYGFEGHPLRKDFPLTGYVEMRYDDETKRVVYEPVKLTQDFRSFDFLSPWEGPGMLPGDEKAN.

The protein belongs to the complex I 30 kDa subunit family. In terms of assembly, NDH-1 is composed of 14 different subunits. Subunits NuoB, C, D, E, F, and G constitute the peripheral sector of the complex.

The protein localises to the cell inner membrane. It carries out the reaction a quinone + NADH + 5 H(+)(in) = a quinol + NAD(+) + 4 H(+)(out). Its function is as follows. NDH-1 shuttles electrons from NADH, via FMN and iron-sulfur (Fe-S) centers, to quinones in the respiratory chain. The immediate electron acceptor for the enzyme in this species is believed to be ubiquinone. Couples the redox reaction to proton translocation (for every two electrons transferred, four hydrogen ions are translocated across the cytoplasmic membrane), and thus conserves the redox energy in a proton gradient. This chain is NADH-quinone oxidoreductase subunit C, found in Paramagnetospirillum magneticum (strain ATCC 700264 / AMB-1) (Magnetospirillum magneticum).